A 468-amino-acid polypeptide reads, in one-letter code: Ammonium transporter Amt2 (468 aa).

The next 12 membrane-spanning stretches (helical) occupy residues 1 to 21, 39 to 59, 77 to 97, 123 to 143, 156 to 176, 194 to 214, 236 to 256, 268 to 288, 297 to 317, 321 to 341, 350 to 370, and 400 to 420; these read MVGRMCVAVLIVLLLVATAGA, FVWALICGFLVMFMQAGFAML, LMDFAVGSLAFFAVGFALMMG, LWFFMLVFAATAATIVSGSIA, AVVSAVIYPIYGHWLWGGGWL, FAGSGVVHALGGYIALAAVML, LAFAVIGTFILWFGWFGFNAG, IIASNTNLAAAAGAVTAMAIT, VGMTCNGAVAGLVAITAPCAW, WSSVVIGTIAGFIATYGYWWL, VGAIPVHGFSGTWGLIALGIF, and LISAIVNFAWAFGTGFALFWI.

The protein belongs to the ammonia transporter channel (TC 1.A.11.2) family. Homotrimer.

It localises to the cell membrane. Its function is as follows. Involved in the uptake of ammonium/ammonia (NH(4)(+)/NH(3)). Transport is electrogenic. The protein is Ammonium transporter Amt2 of Archaeoglobus fulgidus (strain ATCC 49558 / DSM 4304 / JCM 9628 / NBRC 100126 / VC-16).